The sequence spans 140 residues: Small ribosomal subunit protein uS19 (140 aa).

It belongs to the universal ribosomal protein uS19 family.

Its function is as follows. Protein S19 forms a complex with S13 that binds strongly to the 16S ribosomal RNA. The polypeptide is Small ribosomal subunit protein uS19 (Sulfolobus acidocaldarius (strain ATCC 33909 / DSM 639 / JCM 8929 / NBRC 15157 / NCIMB 11770)).